A 764-amino-acid chain; its full sequence is G-type lectin S-receptor-like serine/threonine-protein kinase SD3-1 (764 aa).

The N-terminal stretch at 1–24 (MKMLRALLLCLSLVFFLAFQIVVS) is a signal peptide. Bulb-type lectin domains follow at residues 25-151 (EIQL…QSFG) and 154-279 (TDTL…WKPV). Residues 25–442 (EIQLGSKLVV…TKSHSICIPC (418 aa)) are Extracellular-facing. 3 N-linked (GlcNAc...) asparagine glycosylation sites follow: Asn-92, Asn-198, and Asn-248. The region spanning 283 to 320 (VENQCRVFATCGSQVCSFNSSGYTECNCPFNAFVSVSD) is the EGF-like; atypical domain. 5 disulfides stabilise this stretch: Cys-287/Cys-298, Cys-293/Cys-308, Cys-332/Cys-413, Cys-365/Cys-388, and Cys-369/Cys-375. Residues Asn-301 and Asn-353 are each glycosylated (N-linked (GlcNAc...) asparagine). The 82-residue stretch at 332-413 (CKSGFNMVKF…LSSISYVKTC (82 aa)) folds into the Apple domain. A glycan (N-linked (GlcNAc...) asparagine) is linked at Asn-423. Residues 443 to 463 (LVGATSTTLVLFLGFQLGIVV) form a helical membrane-spanning segment. At 464–764 (YIYRRKKKLA…SESSQSLYEP (301 aa)) the chain is on the cytoplasmic side. The 299-residue stretch at 466–764 (YRRKKKLAKK…SESSQSLYEP (299 aa)) folds into the Protein kinase domain. ATP is bound by residues 508–516 (IGPQIFKGV) and Lys-526. Residues 586–603 (LRSKKLTWRIRTDTCLSV) form a caM-binding region. Residues 738–764 (DPPPPPFACARSSPTNSSESSQSLYEP) are disordered. A compositionally biased stretch (low complexity) spans 749-764 (SSPTNSSESSQSLYEP).

The protein resides in the cell membrane. It catalyses the reaction L-seryl-[protein] + ATP = O-phospho-L-seryl-[protein] + ADP + H(+). The catalysed reaction is L-threonyl-[protein] + ATP = O-phospho-L-threonyl-[protein] + ADP + H(+). The sequence is that of G-type lectin S-receptor-like serine/threonine-protein kinase SD3-1 (SD31) from Arabidopsis thaliana (Mouse-ear cress).